A 158-amino-acid polypeptide reads, in one-letter code: MSETVVESFTLDHTKVKAPYVRVIETQAGPNGGSITNYDLRLTQPNETSIETGGLHTLEHLFAGLVRDEIDGIIDMSPFGCRTGFHVISWVNYDSETLAKVFKKVLEKIVSDEVTEVPAAEIESCGNYKDHSLHSAKEWAKIILAQGISSDAFERKIV.

Fe cation-binding residues include His-56, His-60, and Cys-125.

The protein belongs to the LuxS family. In terms of assembly, homodimer. Requires Fe cation as cofactor.

The enzyme catalyses S-(5-deoxy-D-ribos-5-yl)-L-homocysteine = (S)-4,5-dihydroxypentane-2,3-dione + L-homocysteine. Functionally, involved in the synthesis of autoinducer 2 (AI-2) which is secreted by bacteria and is used to communicate both the cell density and the metabolic potential of the environment. The regulation of gene expression in response to changes in cell density is called quorum sensing. Catalyzes the transformation of S-ribosylhomocysteine (RHC) to homocysteine (HC) and 4,5-dihydroxy-2,3-pentadione (DPD). The protein is S-ribosylhomocysteine lyase of Leuconostoc mesenteroides subsp. mesenteroides (strain ATCC 8293 / DSM 20343 / BCRC 11652 / CCM 1803 / JCM 6124 / NCDO 523 / NBRC 100496 / NCIMB 8023 / NCTC 12954 / NRRL B-1118 / 37Y).